Here is a 92-residue protein sequence, read N- to C-terminus: Beta-2-microglobulin (92 aa).

In terms of domain architecture, Ig-like C1-type spans 2-89; sequence PQIQVYSRHP…NHVSMDKPMT (88 aa). A disulfide bond links C22 and C77.

It belongs to the beta-2-microglobulin family. As to quaternary structure, heterodimer of an alpha chain and a beta chain. Beta-2-microglobulin is the beta-chain of major histocompatibility complex class I molecules.

It localises to the secreted. Functionally, component of the class I major histocompatibility complex (MHC). Involved in the presentation of peptide antigens to the immune system. This Mus spretus (Western Mediterranean mouse) protein is Beta-2-microglobulin (B2m).